The primary structure comprises 164 residues: FMN reductase (NADH) RutF (164 aa).

The protein belongs to the non-flavoprotein flavin reductase family. RutF subfamily.

It carries out the reaction FMNH2 + NAD(+) = FMN + NADH + 2 H(+). Catalyzes the reduction of FMN to FMNH2 which is used to reduce pyrimidine by RutA via the Rut pathway. This is FMN reductase (NADH) RutF from Shigella flexneri serotype X (strain 2002017).